The chain runs to 2150 residues: MRSIGGSFHLLQPVVAALILLVVCLVYALQSGSGTISEFSSDVLFSRAKYSGVPVHHSRWRQDAGIHVIDSHHIVRRDSYGRRGKRDVTSTDRRRRLQGVARDCGHACHLRLRSDDAVYIVHLHRWNQIPDSHNKSVPHFSNSNFAPMVLYLDSEEEVRGGMSRTDPDCIYRAHVKGVHQHSIVNLCDSEDGLYGMLALPSGIHTVEPIISGNGTEHDGASRHRQHLVRKFDPMHFKSFDHLNSTSVNETETTVATWQDQWEDVIERKARSRRAANSWDHYVEVLVVADTKMYEYHGRSLEDYVLTLFSTVASIYRHQSLRASINVVVVKLIVLKTENAGPRITQNAQQTLQDFCRWQQYYNDPDDSSVQHHDVAILLTRKDICRSQGKCDTLGLAELGTMCDMQKSCAIIEDNGLSAAFTIAHELGHVFSIPHDDERKCSTYMPVNKNNFHIMAPTLEYNTHPWSWSPCSAGMLERFLENNRGQTQCLFDQPVERRYYEDVFVRDEPGKKYDAHQQCKFVFGPASELCPYMPTCRRLWCATFYGSQMGCRTQHMPWADGTPCDESRSMFCHHGACVRLAPESLTKIDGQWGDWRSWGECSRTCGGGVQKGLRDCDSPKPRNGGKYCVGQRERYRSCNTQECPWDTQPYREVQCSEFNNKDIGIQGVASTNTHWVPKYANVAPNERCKLYCRLSGSAAFYLLRDKVVDGTPCDRNGDDICVAGACMPAGCDHQLHSTLRRDKCGVCGGDDSSCKVVKGTFNEQGTFGYNEVMKIPAGSANIDIRQKGYNNMKEDDNYLSLRAANGEFLLNGHFQVSLARQQIAFQDTVLEYSGSDAIIERINGTGPIRSDIYVHVLSVGSHPPDISYEYMTAAVPNAVIRPISSALYLWRVTDTWTECDRACRGQQSQKLMCLDMSTHRQSHDRNCQNVLKPKQATRMCNIDCSTRWITEDVSSCSAKCGSGQKRQRVSCVKMEGDRQTPASEHLCDRNSKPSDIASCYIDCSGRKWNYGEWTSCSETCGSNGKMHRKSYCVDDSNRRVDESLCGREQKEATERECNRIPCPRWVYGHWSECSRSCDGGVKMRHAQCLDAADRETHTSRCGPAQTQEHCNEHACTWWQFGVWSDCSAKCGDGVQYRDANCTDRHRSVLPEHRCLKMEKIITKPCHRESCPKYKLGEWSQCSVSCEDGWSSRRVSCVSGNGTEVDMSLCGTASDRPASHQTCNLGTCPFWRNTDWSACSVSCGIGHRERTTECIYREQSVDASFCGDTKMPETSQTCHLLPCTSWKPSHWSPCSVTCGSGIQTRSVSCTRGSEGTIVDEYFCDRNTRPRLKKTCEKDTCDGPRVLQKLQADVPPIRWATGPWTACSATCGNGTQRRLLKCRDHVRDLPDEYCNHLDKEVSTRNCRLRDCSYWKMAEWEECPATCGTHVQQSRNVTCVSAEDGGRTILKDVDCDVQKRPTSARNCRLEPCPKGEEHIGSWIIGDWSKCSASCGGGWRRRSVSCTSSSCDETRKPKMFDKCNEELCPPLTNNSWQISPWTHCSVSCGGGVQRRKIWCEDVLSGRKQDDIECSEIKPREQRDCEMPPCRSHYHNKTSSASMTSLSSSNSNTTSSASASSLPILPPVVSWQTSAWSACSAKCGRGTKRRVVECVNPSLNVTVASTECDQTKKPVEEVRCRTKHCPRWKTTTWSSCSVTCGRGIRRREVQCYRGRKNLVSDSECNPKTKLNSVANCFPVACPAYRWNVTPWSKCKDECARGQKQTRRVHCISTSGKRAAPRMCELARAPTSIRECDTSNCPYEWVPGDWQTCSKSCGEGVQTREVRCRRKINFNSTIPIIFMLEDEPAVPKEKCELFPKPNESQTCELNPCDSEFKWSFGPWGECSKNCGQGIRRRRVKCVANDGRRVERVKCTTKKPRRTQYCFERNCLPSTCQELKSQNVKAKDGNYTILLDGFTIEIYCHRMNSTIPKAYLNVNPRTNFAEVYGKKLIYPHTCPFNGDRNDSCHCSEDGDASAGLTRFNKVRIDLLNRKFHLADYTFAKREYGVHVPYGTAGDCYSMKDCPQGIFSIDLKSAGLKLVDDLNWEDQGHRTSSRIDRFYNNAKVIGHCGGFCGKCSPERYKGLIFEVNTKLLNHVKNGGHIDDELDDDGFSGDMD.

A signal peptide spans 1–28; sequence MRSIGGSFHLLQPVVAALILLVVCLVYA. The propeptide occupies 29–273; the sequence is LQSGSGTISE…VIERKARSRR (245 aa). N-linked (GlcNAc...) asparagine glycosylation is found at N134, N213, N243, and N248. A Peptidase M12B domain is found at 280–493; the sequence is HYVEVLVVAD…GQTQCLFDQP (214 aa). Disulfide bonds link C402/C488 and C440/C470. H424 provides a ligand contact to Zn(2+). The active site involves E425. Zn(2+) contacts are provided by H428 and H434. Residues 503–587 form the Disintegrin domain; sequence FVRDEPGKKY…RLAPESLTKI (85 aa). The TSP type-1 1 domain occupies 588–643; it reads DGQWGDWRSWGECSRTCGGGVQKGLRDCDSPKPRNGGKYCVGQRERYRSCNTQECP. 3 disulfides stabilise this stretch: C600–C637, C604–C642, and C615–C627. An N-linked (GlcNAc...) asparagine glycan is attached at N842. TSP type-1 domains follow at residues 943-1003, 1004-1057, 1060-1115, 1116-1165, 1168-1227, 1228-1277, 1280-1339, 1352-1409, 1410-1469, 1474-1524, and 1527-1585; these read CSTR…IDCS, GRKW…RECN, PCPR…HACT, WWQF…KPCH, SCPK…GTCP, FWRN…QTCH, PCTS…DTCD, PPIR…RDCS, YWKM…EPCP, HIGS…ELCP, and TNNS…PPCR. 2 N-linked (GlcNAc...) asparagine glycosylation sites follow: N1139 and N1199. N-linked (GlcNAc...) asparagine glycans are attached at residues N1370 and N1432. 4 N-linked (GlcNAc...) asparagine glycosylation sites follow: N1528, N1590, N1606, and N1654. Residues 1590 to 1614 are disordered; the sequence is NKTSSASMTSLSSSNSNTTSSASAS. Residues 1592-1614 are compositionally biased toward low complexity; that stretch reads TSSASMTSLSSSNSNTTSSASAS. 5 TSP type-1 domains span residues 1621 to 1675, 1678 to 1736, 1737 to 1793, 1794 to 1866, and 1867 to 1924; these read PVVS…VRCR, HCPR…VACP, AYRW…DTSN, CPYE…NPCD, and SEFK…RNCL. Disulfide bonds link C1679–C1718, C1690–C1694, C1690–C1730, C1694–C1735, C1705–C1718, and C1730–C1735. N-linked (GlcNAc...) asparagine glycans are attached at residues N1828 and N1855. Residues 1924–2123 enclose the GON domain; the sequence is LPSTCQELKS…RYKGLIFEVN (200 aa). Residues N1942, N1960, and N1997 are each glycosylated (N-linked (GlcNAc...) asparagine).

Zn(2+) is required as a cofactor. Expressed by the gonadal distal tip cells (DTCs). Expressed in muscles, including body wall, vulval and anal depressor muscles. Expressed in motor neurons and in ASI and ASJ neurons.

It is found in the secreted. The protein localises to the extracellular space. The protein resides in the extracellular matrix. It localises to the basement membrane. Its subcellular location is the endoplasmic reticulum. It is found in the golgi apparatus. Secreted metalloprotease required for distal tip cell (DTC) migration along the body wall basement membranes, a key step that promotes gonad morphogenesis. Probably acts by remodeling the basement membrane during cell migration. Required to restrict presynaptic growth at the neuromuscular junctions (NMJ) in late larval stage and in adult motor neurons, probably by controlling collagen IV emb-9 degradation, a component of the synapse basement membrane. Also involved in the organization of adult muscle morphology. Has a protease-independent function in promoting the transport from the endoplasmic reticulum to the Golgi apparatus of a variety of secretory cargos. Required for the secretion of insulin-like peptide ins-7, daf-28 and ins-18 and TGF beta-like protein daf-7. In peripheral tissues, negatively regulates insulin-mediated daf-16 translocation and thereby negatively regulates lifespan and dauer formation. The chain is A disintegrin and metalloproteinase with thrombospondin motifs gon-1 from Caenorhabditis elegans.